The chain runs to 1198 residues: Sterol 3-beta-glucosyltransferase (1198 aa).

Polar residues predominate over residues 1 to 11 (MPITQIISASD). 2 disordered regions span residues 1–89 (MPIT…DNAD) and 124–162 (SQVD…PEVP). The segment covering 35-51 (RHHRLSRSLSKFKRWRG) has biased composition (basic residues). Residues 52-67 (RSNSSLSMGSSEQQEL) are compositionally biased toward low complexity. Residue serine 76 is modified to Phosphoserine. A compositionally biased stretch (basic and acidic residues) spans 146–162 (VKSKKENLKTKSHPEVP). The region spanning 187–236 (AKLRQRFCLDEQEPFLNDFPAWLLKDVLVQGHIFITTKHFLFFAYLPKNP) is the GRAM 1 domain. The PH domain maps to 238-336 (SVKMSGNLNI…WVNALKKEQF (99 aa)). The tract at residues 427–465 (KSSFGKETPATAEQKNNGEDSKYLNVPTSAVPSSENGKK) is disordered. Residues 452–461 (VPTSAVPSSE) are compositionally biased toward polar residues. A GRAM 2 domain is found at 570–636 (ERFRYHFKFN…VDVETCYKEK (67 aa)). Position 693 is a phosphoserine (serine 693). UDP-alpha-D-glucose is bound by residues serine 749, arginine 750, aspartate 752, asparagine 1025, asparagine 1053, valine 1054, histidine 1056, histidine 1069, serine 1072, glycine 1073, threonine 1074, aspartate 1093, and glutamine 1094.

The protein belongs to the glycosyltransferase 28 family.

It is found in the cytoplasm. It localises to the membrane. It catalyses the reaction a sterol + UDP-alpha-D-glucose = a sterol 3-beta-D-glucoside + UDP + H(+). The catalysed reaction is ergosterol + UDP-alpha-D-glucose = ergosteryl 3-beta-D-glucoside + UDP + H(+). Sterol glycosyltransferase responsible for the glycosylation of ergosterol to form ergosterol-glucoside. Also shows activity in vitro on other sterols such as cholesterol, beta-sitosterol, stigmasterol and tomatidine. In contrasts to what is observed in Pichia pastoris and Aspergillus oryzae, is not involved in cytoplasm to vacuole transport (Cvt), pexophagy or nonselective autophagy in Saccharomyces cerevisiae. The protein is Sterol 3-beta-glucosyltransferase of Saccharomyces cerevisiae (strain YJM789) (Baker's yeast).